The following is a 548-amino-acid chain: Tryprostatin B 6-hydroxylase (548 aa).

3 consecutive transmembrane segments (helical) span residues 5 to 25 (MKCGYLATAGLIGICIHLWYF), 35 to 54 (WRYVRFHLCLTMGVSALLYA), and 73 to 93 (LLMVTYLIGLFTSLLLYRTLF). C491 is a binding site for heme.

Belongs to the cytochrome P450 family. Requires heme as cofactor.

It localises to the membrane. It catalyses the reaction tryprostatin B + reduced [NADPH--hemoprotein reductase] + O2 = 6-hydroxytryprostatin B + oxidized [NADPH--hemoprotein reductase] + H2O + H(+). The protein operates within mycotoxin biosynthesis. Its function is as follows. Cytochrome P450 monooxygenase; part of the gene cluster that mediates the biosynthesis of fumitremorgins, indole alkaloids that carry not only intriguing chemical structures, but also interesting biological and pharmacological activities. The biosynthesis of fumitremorgin-type alkaloids begins by condensation of the two amino acids L-tryptophan and L-proline to brevianamide F, catalyzed by the non-ribosomal peptide synthetase ftmPS/ftmA. Brevianamide F is then prenylated by the prenyltransferase ftmPT1/ftmB in the presence of dimethylallyl diphosphate, resulting in the formation of tryprostatin B. The three cytochrome P450 monooxygenases, ftmP450-1/ftmC, ftmP450-2/ftmE and ftmP450-3/FtmG, are responsible for the conversion of tryprostatin B to 6-hydroxytryprostatin B, tryprostatin A to fumitremorgin C and fumitremorgin C to 12,13-dihydroxyfumitremorgin C, respectively. The putative methyltransferase ftmMT/ftmD is expected for the conversion of 6-hydroxytryprostatin B to tryprostatin A. FtmPT2/FtmH catalyzes the prenylation of 12,13-dihydroxyfumitre-morgin C in the presence of dimethylallyl diphosphate, resulting in the formation of fumitremorgin B. Fumitremorgin B is further converted to verruculogen by ftmOx1/ftmF via the insertion of an endoperoxide bond between the two prenyl moieties. Finally, verruculogen is further converted to fumitremorgin A by the verruculogen prenyltransferase ftmPT3. This is Tryprostatin B 6-hydroxylase from Neosartorya fischeri (strain ATCC 1020 / DSM 3700 / CBS 544.65 / FGSC A1164 / JCM 1740 / NRRL 181 / WB 181) (Aspergillus fischerianus).